The primary structure comprises 361 residues: Peptide chain release factor 1 (361 aa).

The residue at position 235 (Q235) is an N5-methylglutamine. Positions 288–307 (AARSADRKDQVGSGDRSERI) are disordered.

This sequence belongs to the prokaryotic/mitochondrial release factor family. In terms of processing, methylated by PrmC. Methylation increases the termination efficiency of RF1.

It localises to the cytoplasm. Peptide chain release factor 1 directs the termination of translation in response to the peptide chain termination codons UAG and UAA. This Nitrobacter hamburgensis (strain DSM 10229 / NCIMB 13809 / X14) protein is Peptide chain release factor 1.